Consider the following 362-residue polypeptide: MVETKSIAPEFKKYLKFDSNNSNIRVGVAMSGGVDSSTVAYLLKQQGYDIFGVTMKTFKDEDSDAKKVCDDLGIEHYILDVRDEFKEKVVDYFVNEYMNGRTPNPCMVCNRYIKFGKMLDFILSKDASFMATGHYTKLKNGLLSVGDDSNKDQVYFLSQIEKNKLSKIIFPVGDLEKTKLRELAEQLGVRVYSKKDSQEICFVDDGKLKQFLIENTKGKAEKPGNIVDKNGNILGKHKGFSFYTIGQRKGLGISSEEPLYVLAFDRKTNNIIVGQNEDLFRDELIATRLNLFSVSSLEGLDNLECFAKTRSRDILHKCLLKKDGDNFQVKFIDNKVRAITPGQGIVFYNNDGNVIAGGFIEK.

ATP is bound by residues 29 to 36 (AMSGGVDS) and Met-55. The active-site Nucleophile is Cys-109. An intrachain disulfide couples Cys-109 to Cys-201. ATP is bound at residue Gly-133. Residues 151–153 (KDQ) are interaction with tRNA. Cys-201 acts as the Cysteine persulfide intermediate in catalysis.

Belongs to the MnmA/TRMU family.

The protein resides in the cytoplasm. It carries out the reaction S-sulfanyl-L-cysteinyl-[protein] + uridine(34) in tRNA + AH2 + ATP = 2-thiouridine(34) in tRNA + L-cysteinyl-[protein] + A + AMP + diphosphate + H(+). Catalyzes the 2-thiolation of uridine at the wobble position (U34) of tRNA, leading to the formation of s(2)U34. The polypeptide is tRNA-specific 2-thiouridylase MnmA 1 (Fusobacterium nucleatum subsp. nucleatum (strain ATCC 25586 / DSM 15643 / BCRC 10681 / CIP 101130 / JCM 8532 / KCTC 2640 / LMG 13131 / VPI 4355)).